Here is an 804-residue protein sequence, read N- to C-terminus: Leucine--tRNA ligase (804 aa).

A 'HIGH' region motif is present at residues 39–50 (PFPSGKGLHVGH). Positions 573 to 577 (KMSKS) match the 'KMSKS' region motif. Lys-576 contacts ATP.

The protein belongs to the class-I aminoacyl-tRNA synthetase family.

It localises to the cytoplasm. It carries out the reaction tRNA(Leu) + L-leucine + ATP = L-leucyl-tRNA(Leu) + AMP + diphosphate. The chain is Leucine--tRNA ligase from Lactobacillus johnsonii (strain CNCM I-12250 / La1 / NCC 533).